A 429-amino-acid chain; its full sequence is MLIDKCTLFLRAGNGGNGVISWRKEAHYPEGGPWGGDGGKGGDVYIIGDHNLNSLIDLRYKKKIEAEDGENGKTKLATGKNGNDIYIKVPVGTTITNSITNEVIVDILVTGQKYLICKGGMGGKGNAYFKSSKNRIPNLCENGELGETIEAQFELKYIADVGLLGLPNAGKSTLVNSLSNTNLKTANYMFTTLSPSLGVVNFEDEHLVFADIPGIIEDASNGSGLGLDFLKHIERCHFLIHLISVANIDTENPFKDYLTIVEELKKYNKEILKRKIFIVLNKIDENDSKDNINLFLKEFKKISNKKVYQISGFFKENTNELLKDIFKDYKKHKEQWERELEEKINSYSLVKVEKEQEDIVTYEKDENRIWVVSSKRIAYWFNRIPFNTDENVTRFMQKIKMDEIEQTLKDKGAKIGDSFRIQDVMFEIN.

In terms of domain architecture, Obg spans 1–158 (MLIDKCTLFL…IEAQFELKYI (158 aa)). One can recognise an OBG-type G domain in the interval 159–330 (ADVGLLGLPN…LLKDIFKDYK (172 aa)). GTP-binding positions include 165–172 (GLPNAGKS), 190–194 (FTTLS), 211–214 (DIPG), 281–284 (NKID), and 311–313 (SGF). Residues S172 and T192 each contribute to the Mg(2+) site. In terms of domain architecture, OCT spans 351–429 (KVEKEQEDIV…RIQDVMFEIN (79 aa)).

Belongs to the TRAFAC class OBG-HflX-like GTPase superfamily. OBG GTPase family. In terms of assembly, monomer. Mg(2+) serves as cofactor.

It localises to the cytoplasm. An essential GTPase which binds GTP, GDP and possibly (p)ppGpp with moderate affinity, with high nucleotide exchange rates and a fairly low GTP hydrolysis rate. Plays a role in control of the cell cycle, stress response, ribosome biogenesis and in those bacteria that undergo differentiation, in morphogenesis control. The chain is GTPase Obg from Malacoplasma penetrans (strain HF-2) (Mycoplasma penetrans).